A 603-amino-acid polypeptide reads, in one-letter code: Putative ankyrin repeat protein FPV162 (603 aa).

ANK repeat units lie at residues 23-53 (FKDT…DINV), 57-87 (FKKT…NVNV), 91-120 (FEST…DPNT), 124-155 (NGQT…NVNA), 159-189 (KHNT…DVKI), 193-223 (DGIT…DVNA), 227-257 (EGNT…EVNA), 261-291 (VGDT…NVNA), 295-325 (ISVT…EVNS), 329-362 (YGRT…DIEA), 366-397 (IGGT…DINT), 401-428 (RDET…STNI), 432-467 (SNIT…DIKN), and 504-533 (NNMY…DIYL).

This is Putative ankyrin repeat protein FPV162 from Vertebrata (FPV).